Consider the following 485-residue polypeptide: Aspartyl/glutamyl-tRNA(Asn/Gln) amidotransferase subunit B (485 aa).

The protein belongs to the GatB/GatE family. GatB subfamily. As to quaternary structure, heterotrimer of A, B and C subunits.

The catalysed reaction is L-glutamyl-tRNA(Gln) + L-glutamine + ATP + H2O = L-glutaminyl-tRNA(Gln) + L-glutamate + ADP + phosphate + H(+). It catalyses the reaction L-aspartyl-tRNA(Asn) + L-glutamine + ATP + H2O = L-asparaginyl-tRNA(Asn) + L-glutamate + ADP + phosphate + 2 H(+). Allows the formation of correctly charged Asn-tRNA(Asn) or Gln-tRNA(Gln) through the transamidation of misacylated Asp-tRNA(Asn) or Glu-tRNA(Gln) in organisms which lack either or both of asparaginyl-tRNA or glutaminyl-tRNA synthetases. The reaction takes place in the presence of glutamine and ATP through an activated phospho-Asp-tRNA(Asn) or phospho-Glu-tRNA(Gln). This is Aspartyl/glutamyl-tRNA(Asn/Gln) amidotransferase subunit B from Borreliella afzelii (strain PKo) (Borrelia afzelii).